Reading from the N-terminus, the 560-residue chain is Nuclear receptor subfamily 5 group A member 2 (560 aa).

Residues G17–I54 form a disordered region. Basic and acidic residues predominate over residues H31–D48. Residues E104–A179 constitute a DNA-binding region (nuclear receptor). C107, C110, C124, C127, C143, C149, C159, and C162 together coordinate Zn(2+). 2 NR C4-type zinc fingers span residues C107–C127 and C143–C162. Positions K173–K188 are C-terminal extension (CTE). The FTZ-F1 box signature appears at F189–R208. Residue K289 forms a Glycyl lysine isopeptide (Lys-Gly) (interchain with G-Cter in SUMO1) linkage. Residues S319–K558 enclose the NR LBD domain. A phospholipid derivative is bound by residues Y535 and K539. The segment at Y547 to K558 is AF-2.

Belongs to the nuclear hormone receptor family. NR5 subfamily. Monomer; Binds DNA as a monomer. Interacts with nuclear receptor corepressors NR0B1 and NR0B2; repressing NR5A2 nuclear receptor activity. Interacts with nuclear receptor coactivators CTNNB1, PPARGC1A and NCOA2; interaction takes place following ligand-binding and promotes target gene activation. Interacts (when sumoylated) with GPS2; interaction with GPS2 onto hepatic acute phase protein promoters prevents N-Cor corepressor complex dissociation. Interacts with HNF1A. Interacts with GRIP1. Sumoylated by SUMO1 at Lys-289 during the hepatic acute phase response, leading to promote interaction with GPS2 and prevent N-Cor corepressor complex dissociation.

The protein resides in the nucleus. It localises to the chromosome. Functionally, orphan nuclear receptor that binds DNA as a monomer to the 5'-TCAAGGCCA-3' sequence and controls expression of target genes: regulates key biological processes, such as early embryonic development, cholesterol and bile acid synthesis pathways, as well as liver and pancreas morphogenesis. Ligand-binding causes conformational change which causes recruitment of coactivators, promoting target gene activation. The specific ligand is unknown, but specific phospholipids, such as phosphatidylethanolamine, phosphatidylserine, dilauroyl phosphatidylcholine and diundecanoyl phosphatidylcholine can act as ligand in vitro. Acts as a pioneer transcription factor, which unwraps target DNA from histones and elicits local opening of closed chromatin. Plays a central role during preimplantation stages of embryonic development. Plays a minor role in zygotic genome activation (ZGA) by regulating a small set of two-cell stage genes. Plays a major role in morula development (2-16 cells embryos) by acting as a master regulator at the 8-cell stage, controlling expression of lineage-specifying transcription factors and genes involved in mitosis, telomere maintenance and DNA repair. Zygotic NR5A2 binds to both closed and open chromatin with other transcription factors, often at SINE B1/Alu repeats DNA elements, promoting chromatin accessibility at nearby regulatory regions. Also involved in the epiblast stage of development and embryonic stem cell pluripotency, by promoting expression of POU5F1/OCT4. Regulates other processes later in development, such as formation of connective tissue in lower jaw and middle ear, neural stem cell differentiation, ovarian follicle development and Sertoli cell differentiation. Involved in exocrine pancreas development and acinar cell differentiation. Acts as an essential transcriptional regulator of lipid metabolism. Key regulator of cholesterol 7-alpha-hydroxylase gene (CYP7A) expression in liver. Also acts as a negative regulator of inflammation in different organs, such as, liver and pancreas. Protects against intestinal inflammation via its ability to regulate glucocorticoid production. Plays an anti-inflammatory role during the hepatic acute phase response by acting as a corepressor: inhibits the hepatic acute phase response by preventing dissociation of the N-Cor corepressor complex. Acts as a regulator of immunity by promoting lymphocyte T-cell development, proliferation and effector functions. Also involved in resolution of endoplasmic reticulum stress in the liver. This is Nuclear receptor subfamily 5 group A member 2 from Rattus norvegicus (Rat).